Here is a 216-residue protein sequence, read N- to C-terminus: Chaperone protein TorD (216 aa).

This sequence belongs to the TorD/DmsD family. TorD subfamily.

It localises to the cytoplasm. Functionally, involved in the biogenesis of TorA. Acts on TorA before the insertion of the molybdenum cofactor and, as a result, probably favors a conformation of the apoenzyme that is competent for acquiring the cofactor. This Photobacterium profundum (strain SS9) protein is Chaperone protein TorD.